The chain runs to 105 residues: Cell division protein FtsB (105 aa).

At 1 to 3 the chain is on the cytoplasmic side; it reads MGK. Residues 4–21 form a helical membrane-spanning segment; it reads LTLLLLVLLGWLQYSLWL. Over 22–105 the chain is Periplasmic; it reads GKNGVHDLVR…PAAPATQDNQ (84 aa). A coiled-coil region spans residues 28–62; that stretch reads DLVRVESDVAAQQSNNAQLKARNDQLFAEIDDLNG.

The protein belongs to the FtsB family. In terms of assembly, part of a complex composed of FtsB, FtsL and FtsQ.

It is found in the cell inner membrane. Functionally, essential cell division protein. May link together the upstream cell division proteins, which are predominantly cytoplasmic, with the downstream cell division proteins, which are predominantly periplasmic. This chain is Cell division protein FtsB, found in Sodalis glossinidius (strain morsitans).